Reading from the N-terminus, the 362-residue chain is Uracil-DNA glycosylase (362 aa).

A disordered region spans residues 28-97 (ASVAPNDPTE…AGPTEDPNFA (70 aa)). Asp-205 acts as the Proton acceptor in catalysis.

The protein belongs to the uracil-DNA glycosylase (UDG) superfamily. UNG family.

Its subcellular location is the host nucleus. It carries out the reaction Hydrolyzes single-stranded DNA or mismatched double-stranded DNA and polynucleotides, releasing free uracil.. Excises uracil residues from the DNA which can arise as a result of misincorporation of dUMP residues by DNA polymerase or deamination of cytosines. Therefore may reduce deleterious uracil incorporation into the viral genome, particularly in terminally differentiated cells which lack DNA repair enzymes. This Psittacid herpesvirus 1 (isolate Amazon parrot/-/97-0001/1997) (PsHV-1) protein is Uracil-DNA glycosylase (UL2).